A 196-amino-acid chain; its full sequence is UPF0200 protein MK0400 (196 aa).

7–14 (GMPGAGKG) contacts ATP.

This sequence belongs to the UPF0200 family.

The protein is UPF0200 protein MK0400 of Methanopyrus kandleri (strain AV19 / DSM 6324 / JCM 9639 / NBRC 100938).